Here is a 643-residue protein sequence, read N- to C-terminus: Replication protein E1 (643 aa).

The short motif at 81 to 83 (KRK) is the Nuclear localization signal element. Phosphoserine; by host occurs at positions 87, 91, and 105. A Nuclear export signal motif is present at residues 104-113 (ISPRLDAITL). The interval 130 to 166 (LTDSGYGNTEVEAETQVERNGEPEDCGGGGQGRDTEG) is disordered. The DNA-binding region stretch occupies residues 181–347 (QQHTGTTRVL…QTIVEHGLAD (167 aa)). The region spanning 446-596 (IEFIPFLTKL…FPFDRNGNAL (151 aa)) is the SF3 helicase domain. 472 to 479 (GPPDTGKS) provides a ligand contact to ATP. Lys553 participates in a covalent cross-link: Glycyl lysine isopeptide (Lys-Gly) (interchain with G-Cter in SUMO).

It belongs to the papillomaviridae E1 protein family. As to quaternary structure, can form hexamers. Interacts with E2 protein; this interaction increases E1 DNA binding specificity. Interacts with host DNA polymerase subunit POLA2. Interacts with host single stranded DNA-binding protein RPA1. Interacts with host TOP1; this interaction stimulates the enzymatic activity of TOP1. In terms of processing, phosphorylated. Post-translationally, sumoylated.

It is found in the host nucleus. It carries out the reaction Couples ATP hydrolysis with the unwinding of duplex DNA by translocating in the 3'-5' direction.. The enzyme catalyses ATP + H2O = ADP + phosphate + H(+). In terms of biological role, ATP-dependent DNA 3'-5' helicase required for initiation of viral DNA replication. It forms a complex with the viral E2 protein. The E1-E2 complex binds to the replication origin which contains binding sites for both proteins. During the initial step, a dimer of E1 interacts with a dimer of protein E2 leading to a complex that binds the viral origin of replication with high specificity. Then, a second dimer of E1 displaces the E2 dimer in an ATP-dependent manner to form the E1 tetramer. Following this, two E1 monomers are added to each half of the site, which results in the formation of two E1 trimers on the viral ori. Subsequently, two hexamers will be created. The double hexamer acts as a bi-directional helicase machinery and unwinds the viral DNA and then recruits the host DNA polymerase to start replication. This chain is Replication protein E1, found in Homo sapiens (Human).